Here is a 156-residue protein sequence, read N- to C-terminus: DNA gyrase inhibitor (156 aa).

Belongs to the DNA gyrase inhibitor family. Interacts with DNA gyrase.

The protein localises to the cytoplasm. Functionally, inhibits the supercoiling activity of DNA gyrase. Acts by inhibiting DNA gyrase at an early step, prior to (or at the step of) binding of DNA by the gyrase. It protects cells against toxins that target DNA gyrase, by inhibiting activity of these toxins and reducing the formation of lethal double-strand breaks in the cell. The protein is DNA gyrase inhibitor of Serratia proteamaculans (strain 568).